Reading from the N-terminus, the 354-residue chain is Nucleoporin seh1 (354 aa).

WD repeat units lie at residues 10-49, 55-96, 112-153, 161-209, 216-259, and 270-309; these read DHKD…KWNV, AHSG…KVSS, DSRT…NLSQ, SNKL…RKCV, DITD…TDIS, and EHNC…QWRC.

Belongs to the WD repeat SEC13 family. Probable component of the nuclear pore complex (NPC). Component of the GATOR complex consisting of mio, Nup44A/Seh1, Im11, Nplr3, Nplr2, Wdr24, Wdr59 and Sec13. Within the GATOR complex, probable component of the GATOR2 subcomplex which is likely composed of mio, Nup44A/Seh1, Wdr24, Wdr59 and Sec13. Interacts with mio. Interacts with Wdr24. The GATOR2 complex associates with unmet in the absence of S-adenosyl-L-methionine; the mio-Wdr24-Nup44A subcomplex is essential and sufficient for this interaction while Wdr59 and Sec13 are dispensable. This association acts as a nutrient sensor to inhibit mTORC1 signaling in the absence of methionine. Expressed in ovarian cysts.

It is found in the nucleus envelope. Its subcellular location is the lysosome. Functionally, probable component of the nuclear pore complex (NPC). Involved in maintaining the localization of another nucleoporin Mgtor to the nuclear envelope of early meiotic female germline cells. It is not involved in recruiting the nucleoporins Mgtor, Nup107, Nup153 and FG-containing nucleoporins to the NPC. Its function is as follows. An essential component of the GATOR subcomplex GATOR2 which functions as an activator of the amino acid-sensing branch of the mTORC1 signaling pathway. The two GATOR subcomplexes, GATOR1 and GATOR2, regulate the mTORC1 pathway in order to mediate metabolic homeostasis, female gametogenesis and the response to amino acid limitation and complete starvation. GATOR2 activates the mTORC1 signaling pathway through the inhibition of the GATOR1 subcomplex, controlling the switch to cell proliferation growth under nutrient replete conditions and growth during female oocyte development. This component is required for activating mTORC1 specifically in germline cells to promote cell growth and maintain the oocyte fate, probably influences the organization and/or function of microtubules within ovarian cysts, and promotes accumulation of another GATOR2 complex member mio in germline and somatic tissues. GATOR1 and GATOR2 act at different stages of oogenesis to regulate mTORC1 in order to control meiotic entry and promote oocyte growth and development. After exactly four mitotic cyst divisions, the GATOR1 complex members (Iml1, Nprl2 and Nprl3) down-regulate mTORC1 to slow cellular metabolism and promote the mitotic/meiotic transition. At later stages of oogenesis, the mio and Nup44A components of the GATOR2 complex inhibit GATOR1 and thus activate mTORC1 to promote meiotic progression, and drive oocyte growth and development. In addition to its role in the regulation of the mTORC1 complex, functions independently of mTORC1 to prevent the inappropriate accumulation of autolysosomes in germline tissues. This chain is Nucleoporin seh1, found in Drosophila melanogaster (Fruit fly).